A 396-amino-acid polypeptide reads, in one-letter code: Calsequestrin-1 (396 aa).

An N-terminal signal peptide occupies residues 1–34 (MSATDRMGPRAVPGLRLALLLLLVLGTPKSGVQG). The residue at position 43 (Tyr-43) is a Phosphotyrosine. Position 81 is a phosphoserine (Ser-81). Residue Thr-124 is modified to Phosphothreonine. Ser-216 is subject to Phosphoserine. Residue Asn-350 is glycosylated (N-linked (GlcNAc...) asparagine).

Belongs to the calsequestrin family. As to quaternary structure, monomer; increases in response to a depletion of intracellular calcium. Homodimer. Homotetramer and homopolymer. Can form linear homooligomers. Ca(2+) ions promote oligomerization. Interacts (via C-terminal end and preferentially with the monomeric form) with STIM1; this interaction increases in response to a depletion of intracellular calcium, decreases both STIM1 aggregation and clustering, interaction of STIM1 with ORAI1 and store-operated Ca(2+) entry (SOCE) activity. Interacts with ASPH and TRDN. In terms of processing, N-glycosylated. As to expression, expressed in myoblasts (at protein level).

It localises to the endoplasmic reticulum. The protein localises to the sarcoplasmic reticulum. Its subcellular location is the sarcoplasmic reticulum lumen. It is found in the sarcoplasmic reticulum membrane. The protein resides in the mitochondrion matrix. In terms of biological role, calsequestrin is a high-capacity, moderate affinity, calcium-binding protein and thus acts as an internal calcium store in muscle. Calcium ions are bound by clusters of acidic residues at the protein surface, often at the interface between subunits. Can bind around 80 Ca(2+) ions. Regulates the release of lumenal Ca(2+) via the calcium release channel RYR1; this plays an important role in triggering muscle contraction. Negatively regulates store-operated Ca(2+) entry (SOCE) activity. The sequence is that of Calsequestrin-1 (CASQ1) from Homo sapiens (Human).